The primary structure comprises 218 residues: Probable nicotinate-nucleotide adenylyltransferase (218 aa).

This sequence belongs to the NadD family.

It carries out the reaction nicotinate beta-D-ribonucleotide + ATP + H(+) = deamido-NAD(+) + diphosphate. Its pathway is cofactor biosynthesis; NAD(+) biosynthesis; deamido-NAD(+) from nicotinate D-ribonucleotide: step 1/1. Catalyzes the reversible adenylation of nicotinate mononucleotide (NaMN) to nicotinic acid adenine dinucleotide (NaAD). The protein is Probable nicotinate-nucleotide adenylyltransferase of Syntrophotalea carbinolica (strain DSM 2380 / NBRC 103641 / GraBd1) (Pelobacter carbinolicus).